The sequence spans 236 residues: tRNA1(Val) (adenine(37)-N6)-methyltransferase (236 aa).

This sequence belongs to the methyltransferase superfamily. tRNA (adenine-N(6)-)-methyltransferase family.

The protein localises to the cytoplasm. It catalyses the reaction adenosine(37) in tRNA1(Val) + S-adenosyl-L-methionine = N(6)-methyladenosine(37) in tRNA1(Val) + S-adenosyl-L-homocysteine + H(+). Specifically methylates the adenine in position 37 of tRNA(1)(Val) (anticodon cmo5UAC). This Histophilus somni (strain 2336) (Haemophilus somnus) protein is tRNA1(Val) (adenine(37)-N6)-methyltransferase.